Reading from the N-terminus, the 84-residue chain is Turripeptide IX-03 (84 aa).

Residues 1-21 (MGFYMLLTVALLLTSLMNVEA) form the signal peptide. A propeptide spanning residues 22-39 (TPVDQAERSALEKSGLGN) is cleaved from the precursor. Cystine bridges form between C48–C70, C55–C74, and C60–C81.

As to expression, expressed by the venom duct.

The protein resides in the secreted. The polypeptide is Turripeptide IX-03 (Gemmula speciosa (Splendid gem-turris)).